A 625-amino-acid polypeptide reads, in one-letter code: tRNA-guanine(15) transglycosylase (625 aa).

The active-site Nucleophile is the D86. D121 and G184 together coordinate substrate. A PUA domain is found at 546-621 (GLRVVVDDES…VAVKVHEGVN (76 aa)).

This sequence belongs to the archaeosine tRNA-ribosyltransferase family. It depends on Zn(2+) as a cofactor.

The enzyme catalyses guanosine(15) in tRNA + 7-cyano-7-deazaguanine = 7-cyano-7-carbaguanosine(15) in tRNA + guanine. It participates in tRNA modification; archaeosine-tRNA biosynthesis. Exchanges the guanine residue with 7-cyano-7-deazaguanine (preQ0) at position 15 in the dihydrouridine loop (D-loop) of archaeal tRNAs. This Picrophilus torridus (strain ATCC 700027 / DSM 9790 / JCM 10055 / NBRC 100828 / KAW 2/3) protein is tRNA-guanine(15) transglycosylase.